The chain runs to 200 residues: MTRYPDYLSKLIFFLRKLPGIGFKTAEKLAFELISWDSEQLKILGNAFHNVASERSHCPLCFTLKESKEADCHFCREERDNQSLCIVASPKDVFFLERSKVFKGRYHVLGSLLSPITGKHIENERLSILKSRIETLCPKEIILAIDATLEGDATALFLKQELQHFSVNISRLALGLPIGLSFDYVDSGTLARAFSGRHSY.

The segment at 58 to 75 (CPLCFTLKESKEADCHFC) adopts a C4-type zinc-finger fold. The Toprim domain maps to 82–177 (QSLCIVASPK…NISRLALGLP (96 aa)).

This sequence belongs to the RecR family.

Its function is as follows. May play a role in DNA repair. It seems to be involved in an RecBC-independent recombinational process of DNA repair. It may act with RecF and RecO. This is Recombination protein RecR from Chlamydia pneumoniae (Chlamydophila pneumoniae).